Here is a 283-residue protein sequence, read N- to C-terminus: Tetraspanin-33 (283 aa).

The Cytoplasmic portion of the chain corresponds to 1-24; that stretch reads MARRPGVPAAYGDEFSFVSPLVKY. A helical membrane pass occupies residues 25 to 45; it reads LLFFFNMLFWVISMVMVAVGV. Topologically, residues 46-64 are extracellular; the sequence is YARLMKHAEAALACLAVDP. A helical membrane pass occupies residues 65-85; it reads AILLIVVGVLMFLLTFCGCIG. The Cytoplasmic portion of the chain corresponds to 86 to 96; that stretch reads SLRENICLLQT. A helical transmembrane segment spans residues 97–117; the sequence is FSLCLTIVFLLQLAAGILGFV. Residues 118–235 are Extracellular-facing; it reads FSDKARGKVS…DKLVNWIHSN (118 aa). 4 disulfides stabilise this stretch: Cys156-Cys224, Cys157-Cys189, Cys173-Cys183, and Cys190-Cys203. Asn172 carries N-linked (GlcNAc...) asparagine glycosylation. The chain crosses the membrane as a helical span at residues 236–256; it reads LFLLGGVALGLAIPQLVGILL. Topologically, residues 257–283 are cytoplasmic; sequence SQVLVNQIKDQIKLQLYNQQHRADPWY.

The protein belongs to the tetraspanin (TM4SF) family. Homodimer; disulfide-linked. Interacts (via extracellular domain) with ADAM10 (via extracellular domain). Interacts (via cytoplasmic domain) with PLEKHA7 (via WW domains); the interaction is dependent on PDZD11 being bound to PLEKHA7 and facilitates the docking of ADAM10 to zonula adherens. Predominantly expressed in erythroblasts.

The protein localises to the cell membrane. It localises to the cell junction. The protein resides in the adherens junction. Its subcellular location is the cytoplasm. Its function is as follows. Part of TspanC8 subgroup, composed of 6 members that interact with the transmembrane metalloprotease ADAM10. This interaction is required for ADAM10 exit from the endoplasmic reticulum and for enzymatic maturation and trafficking to the cell surface as well as substrate specificity. Different TspanC8/ADAM10 complexes have distinct substrates. Plays an important role in normal erythropoiesis. It has a role in the differentiation of erythroid progenitors. Negatively regulates ligand-induced Notch activity probably by regulating ADAM10 activity. Mediates docking of ADAM10 to zonula adherens by interacting with ADAM10 and, in a PDZD11-dependent manner, with the zonula adherens protein PLEKHA7. The protein is Tetraspanin-33 (Tspan33) of Mus musculus (Mouse).